A 266-amino-acid polypeptide reads, in one-letter code: uncharacterized protein (266 aa).

Residues 1–22 (MGYFKRVVLYIIVMVVSVFIIG) form the signal peptide. Cys-23 carries the N-palmitoyl cysteine lipid modification. The S-diacylglycerol cysteine moiety is linked to residue Cys-23.

The protein belongs to the staphylococcal tandem lipoprotein family.

It localises to the cell membrane. This is an uncharacterized protein from Staphylococcus aureus (strain N315).